The chain runs to 101 residues: Small ribosomal subunit protein uS14 (101 aa).

The span at 1–10 (MAKKSSIEKN) shows a compositional bias: basic and acidic residues. Residues 1 to 23 (MAKKSSIEKNNRRKRMTGNAAAK) are disordered.

Belongs to the universal ribosomal protein uS14 family. In terms of assembly, part of the 30S ribosomal subunit. Contacts proteins S3 and S10.

In terms of biological role, binds 16S rRNA, required for the assembly of 30S particles and may also be responsible for determining the conformation of the 16S rRNA at the A site. The polypeptide is Small ribosomal subunit protein uS14 (Nitrobacter hamburgensis (strain DSM 10229 / NCIMB 13809 / X14)).